We begin with the raw amino-acid sequence, 119 residues long: Large ribosomal subunit protein eL8 (119 aa).

It belongs to the eukaryotic ribosomal protein eL8 family. Part of the 50S ribosomal subunit. Probably part of the RNase P complex.

It is found in the cytoplasm. In terms of biological role, multifunctional RNA-binding protein that recognizes the K-turn motif in ribosomal RNA, the RNA component of RNase P, box H/ACA, box C/D and box C'/D' sRNAs. The protein is Large ribosomal subunit protein eL8 of Archaeoglobus fulgidus (strain ATCC 49558 / DSM 4304 / JCM 9628 / NBRC 100126 / VC-16).